The sequence spans 475 residues: Early growth response protein 1-B (475 aa).

2 disordered regions span residues 109-180 and 264-285; these read NVSS…TASI and PSRMRKYPNRPSKTPPHERPYA. The segment covering 111–140 has biased composition (low complexity); that stretch reads SSSSAPSSSPSSSSSSSSSSSSQSPPLSCS. A compositionally biased stretch (polar residues) spans 170 to 179; sequence QPFQNASTAS. C2H2-type zinc fingers lie at residues 284-308, 314-336, and 342-364; these read YACPVESCDRRFSRSDELTRHIRIH, FQCRICMRNFSRSDHLTTHIRTH, and FACDICGRKFARSDERKRHTKIH. Residues 355 to 379 are disordered; that stretch reads DERKRHTKIHLRQKDKKADKATPVS. The span at 359 to 369 shows a compositional bias: basic residues; that stretch reads RHTKIHLRQKD.

It belongs to the EGR C2H2-type zinc-finger protein family.

It is found in the nucleus. The protein resides in the cytoplasm. Its function is as follows. Transcriptional regulator. Recognizes and binds to the DNA sequence 5'-GCG(T/G)GGGCG-3'(EGR-site) in the promoter region of target genes. Binds double-stranded target DNA, irrespective of the cytosine methylation status. Regulates the transcription of numerous target genes, and thereby plays an important role in regulating the response to growth factors, DNA damage, and ischemia. Plays a role in the regulation of cell survival, proliferation and cell death. Mediates responses to ischemia and hypoxia; regulates the expression of proteins that are involved in inflammatory processes. Plays a role in regulating the expression of circadian clock genes. The protein is Early growth response protein 1-B (egr1-b) of Xenopus laevis (African clawed frog).